We begin with the raw amino-acid sequence, 398 residues long: Protein-glutamate methylesterase/protein-glutamine glutaminase (398 aa).

Residues 4–121 (KVLVVDDSSF…ATNKDDAILL (118 aa)) enclose the Response regulatory domain. The residue at position 55 (D55) is a 4-aspartylphosphate. The tract at residues 133-200 (RMYRSSSLTP…SANPTTSSIS (68 aa)) is disordered. 2 stretches are compositionally biased toward polar residues: residues 136-146 (RSSSLTPTSTI) and 168-200 (RLAS…SSIS). In terms of domain architecture, CheB-type methylesterase spans 205 to 398 (SGKQYKLLLI…EAILKESSRG (194 aa)). Residues S217, H244, and D340 contribute to the active site.

The protein belongs to the CheB family. Post-translationally, phosphorylated by CheA. Phosphorylation of the N-terminal regulatory domain activates the methylesterase activity.

It localises to the cytoplasm. It carries out the reaction [protein]-L-glutamate 5-O-methyl ester + H2O = L-glutamyl-[protein] + methanol + H(+). It catalyses the reaction L-glutaminyl-[protein] + H2O = L-glutamyl-[protein] + NH4(+). Functionally, involved in chemotaxis. Part of a chemotaxis signal transduction system that modulates chemotaxis in response to various stimuli. Catalyzes the demethylation of specific methylglutamate residues introduced into the chemoreceptors (methyl-accepting chemotaxis proteins or MCP) by CheR. Also mediates the irreversible deamidation of specific glutamine residues to glutamic acid. This chain is Protein-glutamate methylesterase/protein-glutamine glutaminase, found in Shewanella frigidimarina (strain NCIMB 400).